A 205-amino-acid polypeptide reads, in one-letter code: Large ribosomal subunit protein uL18 (205 aa).

The protein belongs to the universal ribosomal protein uL18 family. In terms of assembly, part of the 50S ribosomal subunit. Contacts the 5S and 23S rRNAs.

This is one of the proteins that bind and probably mediate the attachment of the 5S RNA into the large ribosomal subunit, where it forms part of the central protuberance. This chain is Large ribosomal subunit protein uL18, found in Haloquadratum walsbyi (strain DSM 16790 / HBSQ001).